A 185-amino-acid polypeptide reads, in one-letter code: Putative manganese efflux pump MntP (185 aa).

Helical transmembrane passes span 4-24 (LFIGELVSLSIMAFALGTDAF), 40-60 (IFHIGVVIGLFHVMMPLAGMA), 64-84 (LLSGFLGMLAVYIGGSLLFIL), 108-128 (LLLFAIGVSLDSFSVGLSLGM), 134-154 (FLAVTLFGVFSTVLTWAGLLA), and 165-185 (YSEALGGAILIGFGLKLLLPV).

This sequence belongs to the MntP (TC 9.B.29) family.

The protein resides in the cell membrane. In terms of biological role, probably functions as a manganese efflux pump. The protein is Putative manganese efflux pump MntP of Bacillus velezensis (strain DSM 23117 / BGSC 10A6 / LMG 26770 / FZB42) (Bacillus amyloliquefaciens subsp. plantarum).